Reading from the N-terminus, the 334-residue chain is Phosphate acyltransferase (334 aa).

Belongs to the PlsX family. In terms of assembly, homodimer. Probably interacts with PlsY.

It is found in the cytoplasm. The enzyme catalyses a fatty acyl-[ACP] + phosphate = an acyl phosphate + holo-[ACP]. It participates in lipid metabolism; phospholipid metabolism. In terms of biological role, catalyzes the reversible formation of acyl-phosphate (acyl-PO(4)) from acyl-[acyl-carrier-protein] (acyl-ACP). This enzyme utilizes acyl-ACP as fatty acyl donor, but not acyl-CoA. The chain is Phosphate acyltransferase from Clostridium kluyveri (strain NBRC 12016).